The primary structure comprises 164 residues: Cytochrome c-type biogenesis protein CcmE (164 aa).

Residues 1–8 (MNPRRKSR) are Cytoplasmic-facing. Residues 9–29 (LYLAIVVLIGVALTATLMLYA) traverse the membrane as a helical; Signal-anchor for type II membrane protein segment. Topologically, residues 30–164 (LRSNIDLFYT…ATPQNEGAKS (135 aa)) are periplasmic. Heme contacts are provided by His130 and Tyr134. Residues 131 to 148 (DEKYTPPEVADAMKENHK) are compositionally biased toward basic and acidic residues. The interval 131 to 164 (DEKYTPPEVADAMKENHKGPASAYATPQNEGAKS) is disordered. Positions 155-164 (ATPQNEGAKS) are enriched in polar residues.

The protein belongs to the CcmE/CycJ family.

Its subcellular location is the cell inner membrane. Heme chaperone required for the biogenesis of c-type cytochromes. Transiently binds heme delivered by CcmC and transfers the heme to apo-cytochromes in a process facilitated by CcmF and CcmH. The protein is Cytochrome c-type biogenesis protein CcmE of Serratia proteamaculans (strain 568).